The primary structure comprises 616 residues: Glycoprotein Q1 (616 aa).

Residues 1–24 form the signal peptide; it reads MRPPRRSAPILVCAISMATALSNA. Residues N23, N44, N282, N330, and N351 are each glycosylated (N-linked (GlcNAc...) asparagine; by host).

Interacts with isoform gQ2. The heterodimer gQ1-gQ2 associates with the glycoprotein complex gH-gL to form a tetrameric complex. The gH/gL/gQ1/gQ2 complex binds to host TNFRSF4. In terms of processing, glycosylated by host.

The protein resides in the virion. It is found in the host endoplasmic reticulum lumen. Plays a role in virus entry by participating in host receptor binding at the cell surface. In Homo sapiens (Human), this protein is Glycoprotein Q1.